Reading from the N-terminus, the 534-residue chain is MEGPTHPKPSKDKTFSWDLMILVGVLLRLDVGMANPSPHQIYNVTWTITNLVTGTKANATSMLGTLTDAFPTMYFDLCDIIGNTWNPSDQEPFPGYGCDHPMRRWQQRNTPFYVCPGHANRKQCGGPQDGFCAVWGCETTGETYWRPTSSWDYITVKKGVTQGIYQCSGGGWCGPCYDKAVHSSITGASEGGRCNPLILQFTQKGRQTSWDGPKSWGLRLYRSGYDPIALFSVSRQVMTITPPQAMGPNLVLPDQKPPSRQSQIESRVTPHHSQGNGGTPGITLVNASIAPLSTPVTPASPKRIGTGNRLINLVQGTYLALNVTNPNKTKDCWLCLVSRPPYYEGIAVLGNYSNQTNPPPSCLSDPQHKLTISEVSGQGLCIGTVPKTHQALCKKTQKGHKGTHYLAAPSGTYWACNTGLIPCISMAVLNWTSDFCVLIELWPRVTYHQPEYVYTHFDKTVRLRREPISLTVALMLGGLTVGGIAAGVGTGTKALLETAQFRQLQMAMHTDIQALEESISALEKSLTSLSEVVL.

Residues 1–34 form the signal peptide; sequence MEGPTHPKPSKDKTFSWDLMILVGVLLRLDVGMA. Over 35–534 the chain is Extracellular; it reads NPSPHQIYNV…SLTSLSEVVL (500 aa). N-linked (GlcNAc...) asparagine; by host glycans are attached at residues Asn43 and Asn58. Cystine bridges form between Cys115–Cys132 and Cys124–Cys137. The disordered stretch occupies residues 245–279; it reads AMGPNLVLPDQKPPSRQSQIESRVTPHHSQGNGGT. Over residues 258–274 the composition is skewed to polar residues; the sequence is PSRQSQIESRVTPHHSQ. 3 N-linked (GlcNAc...) asparagine; by host glycosylation sites follow: Asn286, Asn322, and Asn327. The short motif at 332 to 335 is the CXXC element; it reads CWLC. N-linked (GlcNAc...) asparagine; by host glycans are attached at residues Asn351, Asn354, and Asn430. Residues 468–488 are fusion peptide; it reads ISLTVALMLGGLTVGGIAAGV. A coiled-coil region spans residues 496–534; the sequence is LETAQFRQLQMAMHTDIQALEESISALEKSLTSLSEVVL.

As to quaternary structure, the mature envelope protein (Env) consists of a trimer of SU-TM heterodimers attached by noncovalent interactions or by a labile interchain disulfide bond. Post-translationally, specific enzymatic cleavages in vivo yield mature proteins. Envelope glycoproteins are synthesized as an inactive precursor that is N-glycosylated and processed likely by host cell furin or by a furin-like protease in the Golgi to yield the mature SU and TM proteins. The cleavage site between SU and TM requires the minimal sequence [KR]-X-[KR]-R.

The protein resides in the virion membrane. It is found in the host cell membrane. The surface protein (SU) attaches the virus to the host cell by binding to its receptor. This interaction triggers the refolding of the transmembrane protein (TM) and is thought to activate its fusogenic potential by unmasking its fusion peptide. Fusion occurs at the host cell plasma membrane. In terms of biological role, the transmembrane protein (TM) acts as a class I viral fusion protein. Under the current model, the protein has at least 3 conformational states: pre-fusion native state, pre-hairpin intermediate state, and post-fusion hairpin state. During viral and target cell membrane fusion, the coiled coil regions (heptad repeats) assume a trimer-of-hairpins structure, positioning the fusion peptide in close proximity to the C-terminal region of the ectodomain. The formation of this structure appears to drive apposition and subsequent fusion of viral and target cell membranes. Membranes fusion leads to delivery of the nucleocapsid into the cytoplasm. The protein is Envelope glycoprotein (env) of Feline sarcoma virus (strain Snyder-Theilen).